The chain runs to 289 residues: Glycine--tRNA ligase alpha subunit (289 aa).

It belongs to the class-II aminoacyl-tRNA synthetase family. As to quaternary structure, tetramer of two alpha and two beta subunits.

It is found in the cytoplasm. It catalyses the reaction tRNA(Gly) + glycine + ATP = glycyl-tRNA(Gly) + AMP + diphosphate. This chain is Glycine--tRNA ligase alpha subunit, found in Rickettsia felis (strain ATCC VR-1525 / URRWXCal2) (Rickettsia azadi).